The sequence spans 643 residues: Threonine--tRNA ligase (643 aa).

The 61-residue stretch at 1–61 (MIKVTLKDGS…KEDVSLSICT (61 aa)) folds into the TGS domain. The tract at residues 240-540 (DHNKLGRELK…LIEKYAGAFP (301 aa)) is catalytic. Zn(2+) contacts are provided by Cys-335, His-386, and His-517.

Belongs to the class-II aminoacyl-tRNA synthetase family. Homodimer. Requires Zn(2+) as cofactor.

It localises to the cytoplasm. It catalyses the reaction tRNA(Thr) + L-threonine + ATP = L-threonyl-tRNA(Thr) + AMP + diphosphate + H(+). Its function is as follows. Catalyzes the attachment of threonine to tRNA(Thr) in a two-step reaction: L-threonine is first activated by ATP to form Thr-AMP and then transferred to the acceptor end of tRNA(Thr). Also edits incorrectly charged L-seryl-tRNA(Thr). This is Threonine--tRNA ligase from Clostridium botulinum (strain Eklund 17B / Type B).